A 505-amino-acid chain; its full sequence is Probable Xaa-Pro aminopeptidase Pc16g13390 (505 aa).

4 residues coordinate Mn(2+): Asp-287, Asp-298, Glu-436, and Glu-475.

It belongs to the peptidase M24B family. The cofactor is Mn(2+).

It catalyses the reaction Release of any N-terminal amino acid, including proline, that is linked to proline, even from a dipeptide or tripeptide.. Catalyzes the removal of a penultimate prolyl residue from the N-termini of peptides. This Penicillium rubens (strain ATCC 28089 / DSM 1075 / NRRL 1951 / Wisconsin 54-1255) (Penicillium chrysogenum) protein is Probable Xaa-Pro aminopeptidase Pc16g13390.